A 499-amino-acid chain; its full sequence is Tektin-like protein 1 (499 aa).

Ser14 carries the post-translational modification Phosphoserine. Positions 201–225 (WEKKELKSMKRKMEKDMEISEDLLK) form a coiled coil. Positions 265–286 (VDITRPPTPRTQGLKTPPPDPI) are disordered. Residues 308–328 (KDILTEMAKNEVDIQNQQQEI) are a coiled coil. Tyr372 carries the phosphotyrosine modification.

As to quaternary structure, microtubule inner protein component of sperm flagellar doublet microtubules.

The protein resides in the cytoplasm. Its subcellular location is the cytoskeleton. It localises to the flagellum axoneme. Functionally, microtubule inner protein (MIP) part of the dynein-decorated doublet microtubules (DMTs) in sperm flagellar axoneme, which is required for motile flagellum beating. Forms an extensive interaction network cross-linking the lumen of axonemal doublet microtubules. This Mus musculus (Mouse) protein is Tektin-like protein 1.